Consider the following 498-residue polypeptide: Calcium uptake protein, mitochondrial (498 aa).

Residues 1–29 (MPALSHYRSVSSLPSVDRSFLLIQRLRIH) constitute a mitochondrion transit peptide. 4 EF-hand domains span residues 216-241 (EFFM…VTLL), 243-278 (IPES…MRSQ), 329-364 (LTEE…AADA), and 437-472 (LSDN…RERD). Aspartate 222, aspartate 224, aspartate 226, glutamate 233, aspartate 256, aspartate 258, asparagine 260, glutamate 262, and glutamate 267 together coordinate Ca(2+). Ca(2+) contacts are provided by aspartate 450, asparagine 452, aspartate 454, asparagine 456, and glutamate 461.

The protein belongs to the MICU1 family. MICU1 subfamily. In terms of tissue distribution, expressed in both green and non-green tissues, including roots, shoots, floral buds and pollen.

Its subcellular location is the mitochondrion inner membrane. It is found in the mitochondrion intermembrane space. Functionally, calcium-binding protein maintaining matrix calcium levels at low concentration. Regulates mitochondrial calcium dynamics in planta by restricting influx. The chain is Calcium uptake protein, mitochondrial from Arabidopsis thaliana (Mouse-ear cress).